A 291-amino-acid polypeptide reads, in one-letter code: MTMKKLTSTTTTLWDNKLFINNLKNFMQTNTESNNNKTTAQEWKSFILVVVIALMIRILIIESFVVPTGSMKATILENDRIFGTKYSYGYSNYSLSFFDFIHLFKGRIFARTPERGDIIIFRPPHEMNTRYIKRLIGLPGDKVQLIDDVIYINDEKIERVESGIYVSEEGRKYLKFKETLPNGKTYFSYKLAPVLGIMFNDKYGNTDAFYVPEGEYFFLGDNRDQSNDSRIDLGFVPFENFIAKAQFIWFSTKITWWDSDIGVINLILKLKPWAESIRFNRIFRNLYSIED.

At 1-45 (MTMKKLTSTTTTLWDNKLFINNLKNFMQTNTESNNNKTTAQEWKS) the chain is on the cytoplasmic side. A helical membrane pass occupies residues 46–66 (FILVVVIALMIRILIIESFVV). The Periplasmic portion of the chain corresponds to 67 to 291 (PTGSMKATIL…IFRNLYSIED (225 aa)). Active-site residues include Ser70 and Lys133.

This sequence belongs to the peptidase S26 family.

Its subcellular location is the cell inner membrane. The catalysed reaction is Cleavage of hydrophobic, N-terminal signal or leader sequences from secreted and periplasmic proteins.. This Rickettsia bellii (strain RML369-C) protein is Signal peptidase I (lepB).